We begin with the raw amino-acid sequence, 137 residues long: Basic phospholipase A2 beta-bungarotoxin A5 chain (137 aa).

The signal sequence occupies residues 1 to 9; the sequence is AVCVSLLGA. A propeptide spanning residues 10–17 is cleaved from the precursor; it reads ANIPPQHL. Cystine bridges form between cysteine 44/cysteine 136, cysteine 46/cysteine 62, cysteine 61/cysteine 117, cysteine 68/cysteine 110, cysteine 78/cysteine 103, and cysteine 96/cysteine 108. Ca(2+)-binding residues include tyrosine 45, glycine 47, and glycine 49. Residue histidine 65 is part of the active site. Aspartate 66 contributes to the Ca(2+) binding site. Residue aspartate 111 is part of the active site.

It belongs to the phospholipase A2 family. Group I subfamily. D49 sub-subfamily. Heterodimer; disulfide-linked. The A chains have phospholipase A2 activity and the B chains show homology with the basic protease inhibitors. It depends on Ca(2+) as a cofactor. Expressed by the venom gland.

Its subcellular location is the secreted. The enzyme catalyses a 1,2-diacyl-sn-glycero-3-phosphocholine + H2O = a 1-acyl-sn-glycero-3-phosphocholine + a fatty acid + H(+). Functionally, snake venom phospholipase A2 (PLA2) that inhibits neuromuscular transmission by blocking acetylcholine release from the nerve termini. PLA2 catalyzes the calcium-dependent hydrolysis of the 2-acyl groups in 3-sn-phosphoglycerides. In Bungarus multicinctus (Many-banded krait), this protein is Basic phospholipase A2 beta-bungarotoxin A5 chain.